A 180-amino-acid polypeptide reads, in one-letter code: Magnetosome protein MamS (180 aa).

The Cytoplasmic portion of the chain corresponds to Met1 to Thr21. Residues Ala22–Leu42 traverse the membrane as a helical segment. Topologically, residues Pro43–Gln180 are lumenal.

This sequence belongs to the magnetosome MamS family.

The protein localises to the magnetosome membrane. Functionally, may play a role in magnetite crystal growth and size. This is Magnetosome protein MamS from Magnetospirillum gryphiswaldense (strain DSM 6361 / JCM 21280 / NBRC 15271 / MSR-1).